The primary structure comprises 158 residues: Heavy metal-associated isoprenylated plant protein 23 (158 aa).

The HMA domain occupies 31-94; that stretch reads FQTVELKVRM…KAKATGKKAE (64 aa). A metal cation-binding residues include Cys42 and Cys45. A Cysteine methyl ester modification is found at Cys155. Residue Cys155 is the site of S-farnesyl cysteine attachment. Residues 156 to 158 constitute a propeptide, removed in mature form; the sequence is SIM.

Belongs to the HIPP family. As to quaternary structure, interacts with ZHD11/HB29.

Its function is as follows. Heavy-metal-binding protein. The sequence is that of Heavy metal-associated isoprenylated plant protein 23 from Arabidopsis thaliana (Mouse-ear cress).